The following is a 358-amino-acid chain: Glycerol-3-phosphate dehydrogenase [NAD(P)+] (358 aa).

The NADPH site is built by S33, F34, R54, and K128. Residues K128 and G156 each coordinate sn-glycerol 3-phosphate. A160 serves as a coordination point for NADPH. Sn-glycerol 3-phosphate contacts are provided by K211, D264, S274, R275, and N276. Residue K211 is the Proton acceptor of the active site. R275 serves as a coordination point for NADPH. 2 residues coordinate NADPH: V299 and E301.

It belongs to the NAD-dependent glycerol-3-phosphate dehydrogenase family.

The protein resides in the cytoplasm. It carries out the reaction sn-glycerol 3-phosphate + NAD(+) = dihydroxyacetone phosphate + NADH + H(+). The enzyme catalyses sn-glycerol 3-phosphate + NADP(+) = dihydroxyacetone phosphate + NADPH + H(+). The protein operates within membrane lipid metabolism; glycerophospholipid metabolism. In terms of biological role, catalyzes the reduction of the glycolytic intermediate dihydroxyacetone phosphate (DHAP) to sn-glycerol 3-phosphate (G3P), the key precursor for phospholipid synthesis. This is Glycerol-3-phosphate dehydrogenase [NAD(P)+] from Saccharophagus degradans (strain 2-40 / ATCC 43961 / DSM 17024).